The sequence spans 526 residues: Plant intracellular Ras-group-related LRR protein 5 (526 aa).

LRR repeat units lie at residues 229–252 (LSSL…IGGL), 253–275 (ISLT…IGDL), 276–297 (LNLV…SFNR), 298–321 (LIHL…IGSL), 323–344 (SLKK…ISGC), 346–367 (SMEE…VGKL), 368–390 (STLE…MSSM), 391–414 (ANLK…CYAK), 416–437 (LVKL…LIGN), 438–463 (LEKL…TLSN), and 465–484 (RVLQ…ITEK). Residues 485-492 (GAQAVVQY) carry the GVYW; degenerate motif.

It belongs to the SHOC2 family. Widely expressed but preferentially in roots.

Its function is as follows. Leucine-rich repeat protein that likely mediates protein interactions, possibly in the context of signal transduction. The polypeptide is Plant intracellular Ras-group-related LRR protein 5 (PIRL5) (Arabidopsis thaliana (Mouse-ear cress)).